Here is a 116-residue protein sequence, read N- to C-terminus: Ribosome-binding factor A (116 aa).

Belongs to the RbfA family. Monomer. Binds 30S ribosomal subunits, but not 50S ribosomal subunits or 70S ribosomes.

The protein localises to the cytoplasm. In terms of biological role, one of several proteins that assist in the late maturation steps of the functional core of the 30S ribosomal subunit. Associates with free 30S ribosomal subunits (but not with 30S subunits that are part of 70S ribosomes or polysomes). Required for efficient processing of 16S rRNA. May interact with the 5'-terminal helix region of 16S rRNA. This chain is Ribosome-binding factor A, found in Chlorobium phaeobacteroides (strain DSM 266 / SMG 266 / 2430).